The chain runs to 153 residues: uncharacterized protein (153 aa).

Residues 1-19 (MRKYIPLVLFIFSWPVLCA) form the signal peptide. Catalysis depends on residues arginine 46, glutamate 54, and arginine 88.

Belongs to the thermonuclease family.

This is an uncharacterized protein from Escherichia coli.